Consider the following 315-residue polypeptide: Homoserine kinase (315 aa).

Residue 97–107 (PPARGLGSSAT) participates in ATP binding.

This sequence belongs to the GHMP kinase family. Homoserine kinase subfamily.

The protein localises to the cytoplasm. The enzyme catalyses L-homoserine + ATP = O-phospho-L-homoserine + ADP + H(+). Its pathway is amino-acid biosynthesis; L-threonine biosynthesis; L-threonine from L-aspartate: step 4/5. Functionally, catalyzes the ATP-dependent phosphorylation of L-homoserine to L-homoserine phosphate. The chain is Homoserine kinase from Prochlorococcus marinus (strain MIT 9312).